We begin with the raw amino-acid sequence, 145 residues long: Neuromedin-S (145 aa).

Positions 1-27 are cleaved as a signal peptide; sequence MRSEKHLLPLPLLLAICCLGTLHLSSG. Propeptides lie at residues 28–89 and 92–117; these read FPQS…HEIY and FLFQFSRAKDPSLKIGESQIATAEYT. Residue Asn136 is modified to Asparagine amide. A propeptide spanning residues 140-145 is cleaved from the precursor; it reads VSINEH.

The protein belongs to the NmU family. In terms of tissue distribution, expressed by the skin glands.

The protein resides in the secreted. Stimulates uterine smooth muscle contraction (EC(50)=1.6 nM). Synthetic peptide NmS-17 induces calcium mobilization in CHO cells transfected with either human FM-3/GPR66 (EC(50)=0.085 nM) or FM-4/TGR-1 (EC(50)=0.231 nM) NmU/NmS receptors. This Bombina maxima (Giant fire-bellied toad) protein is Neuromedin-S (nms).